We begin with the raw amino-acid sequence, 154 residues long: Proteasome subunit beta type-4 (154 aa).

M1 carries the post-translational modification N-acetylmethionine. Residues 1 to 45 (MESILESRSGHWAGGPAPGQFYRIPPTPGSIVDPXSVLYGSPITR) constitute a propeptide that is removed on maturation. Y102 carries the phosphotyrosine modification.

Belongs to the peptidase T1B family. As to quaternary structure, the 26S proteasome consists of a 20S proteasome core and two 19S regulatory subunits. The 20S proteasome core is a barrel-shaped complex made of 28 subunits that are arranged in four stacked rings. The two outer rings are each formed by seven alpha subunits, and the two inner rings are formed by seven beta subunits. The proteolytic activity is exerted by three beta-subunits PSMB5, PSMB6 and PSMB7. Forms a ternary complex with SMAD1 and OAZ1 before PSMB4 is incorporated into the 20S proteasome. Interacts with PRPF19.

It is found in the cytoplasm. The protein localises to the nucleus. Functionally, non-catalytic component of the 20S core proteasome complex involved in the proteolytic degradation of most intracellular proteins. This complex plays numerous essential roles within the cell by associating with different regulatory particles. Associated with two 19S regulatory particles, forms the 26S proteasome and thus participates in the ATP-dependent degradation of ubiquitinated proteins. The 26S proteasome plays a key role in the maintenance of protein homeostasis by removing misfolded or damaged proteins that could impair cellular functions, and by removing proteins whose functions are no longer required. Associated with the PA200 or PA28, the 20S proteasome mediates ubiquitin-independent protein degradation. This type of proteolysis is required in several pathways including spermatogenesis (20S-PA200 complex) or generation of a subset of MHC class I-presented antigenic peptides (20S-PA28 complex). SMAD1/OAZ1/PSMB4 complex mediates the degradation of the CREBBP/EP300 repressor SNIP1. The polypeptide is Proteasome subunit beta type-4 (PSMB4) (Sus scrofa (Pig)).